We begin with the raw amino-acid sequence, 586 residues long: Chaperonin 60 subunit alpha 1, chloroplastic (586 aa).

The transit peptide at Met-1–Ala-46 directs the protein to the chloroplast. Ser-90 is modified (phosphoserine).

The protein belongs to the chaperonin (HSP60) family. As to quaternary structure, part of the Cpn60 complex composed of 7 alpha and 7 beta subunits. This complex shows ATPase activity. The Cpn60 complex interacts with the Cpn10 complex. Expressed in leaves, stems, siliques and flowers.

It is found in the plastid. The protein localises to the chloroplast. In terms of biological role, binds RuBisCO small and large subunits and is implicated in the assembly of the enzyme oligomer. Involved in protein assisted folding. Required for proper chloroplast development. The protein is Chaperonin 60 subunit alpha 1, chloroplastic (CPN60A1) of Arabidopsis thaliana (Mouse-ear cress).